A 312-amino-acid polypeptide reads, in one-letter code: Malate dehydrogenase (312 aa).

Residues 7–13 and aspartate 34 contribute to the NAD(+) site; that span reads GAAGGIG. Residues arginine 81 and arginine 87 each contribute to the substrate site. Residues asparagine 94 and 117 to 119 contribute to the NAD(+) site; that span reads ITN. Substrate contacts are provided by asparagine 119 and arginine 153. Histidine 177 functions as the Proton acceptor in the catalytic mechanism. Methionine 227 lines the NAD(+) pocket.

It belongs to the LDH/MDH superfamily. MDH type 1 family. As to quaternary structure, homodimer.

It catalyses the reaction (S)-malate + NAD(+) = oxaloacetate + NADH + H(+). Functionally, catalyzes the reversible oxidation of malate to oxaloacetate. The sequence is that of Malate dehydrogenase from Photobacterium profundum (strain SS9).